A 385-amino-acid polypeptide reads, in one-letter code: Putative UDP-N-acetylglucosamine 2-epimerase (385 aa).

It belongs to the UDP-N-acetylglucosamine 2-epimerase family.

It localises to the cytoplasm. It carries out the reaction UDP-N-acetyl-alpha-D-glucosamine = UDP-N-acetyl-alpha-D-mannosamine. In Clostridium acetobutylicum (strain ATCC 824 / DSM 792 / JCM 1419 / IAM 19013 / LMG 5710 / NBRC 13948 / NRRL B-527 / VKM B-1787 / 2291 / W), this protein is Putative UDP-N-acetylglucosamine 2-epimerase.